The primary structure comprises 525 residues: ATP synthase subunit alpha (525 aa).

Position 172–179 (172–179 (GDRQTGKT)) interacts with ATP.

Belongs to the ATPase alpha/beta chains family. F-type ATPases have 2 components, CF(1) - the catalytic core - and CF(0) - the membrane proton channel. CF(1) has five subunits: alpha(3), beta(3), gamma(1), delta(1), epsilon(1). CF(0) has three main subunits: a(1), b(2) and c(9-12). The alpha and beta chains form an alternating ring which encloses part of the gamma chain. CF(1) is attached to CF(0) by a central stalk formed by the gamma and epsilon chains, while a peripheral stalk is formed by the delta and b chains.

It is found in the cell inner membrane. The enzyme catalyses ATP + H2O + 4 H(+)(in) = ADP + phosphate + 5 H(+)(out). Functionally, produces ATP from ADP in the presence of a proton gradient across the membrane. The alpha chain is a regulatory subunit. This is ATP synthase subunit alpha from Parabacteroides distasonis (strain ATCC 8503 / DSM 20701 / CIP 104284 / JCM 5825 / NCTC 11152).